A 188-amino-acid polypeptide reads, in one-letter code: Elongation factor P (188 aa).

This sequence belongs to the elongation factor P family.

The protein localises to the cytoplasm. Its pathway is protein biosynthesis; polypeptide chain elongation. Its function is as follows. Involved in peptide bond synthesis. Stimulates efficient translation and peptide-bond synthesis on native or reconstituted 70S ribosomes in vitro. Probably functions indirectly by altering the affinity of the ribosome for aminoacyl-tRNA, thus increasing their reactivity as acceptors for peptidyl transferase. The chain is Elongation factor P from Caulobacter vibrioides (strain ATCC 19089 / CIP 103742 / CB 15) (Caulobacter crescentus).